A 432-amino-acid chain; its full sequence is MDTSQVRILPKLDISAGHNFTKPSKRINESQDVAEFLSSKAYVDLMTFLLQLNRSLFPTKLPDGRVLTWELNSEAVEYSAPVRQLQQLLSKLEAILDEAPPDTGPRRFGNISFRRWYEMVESRAASLLEECLSKEILQMPSSDPGAPTAEVELLAYFLGSWGSPQRLDYGTGHELSFLAFLAGIWKLHGFPENSPGVEERAIVLGVIQPYLELVRTIIKRYTLEPAGSHGVWGLDDHSFIPYIFGSAQLAPAISESDRIPEEGSLSDAPAPGGVTKANVVERERKHNLYFSAIGFIYDVKRGPFWEHSPMLYDISGIQAGWAKINKGMIKMYNAEVLSKFPVVQHFPFGSLFSWERDPNAPSPAADAHIAATTRRTDEASTSSYLYSPKYIKATSWSYGSYKGALGNISTRWTGSPWRFYVCRPYANESSVG.

This sequence belongs to the PTPA-type PPIase family.

The protein resides in the cytoplasm. Its subcellular location is the nucleus. The enzyme catalyses [protein]-peptidylproline (omega=180) = [protein]-peptidylproline (omega=0). In terms of biological role, PPIases accelerate the folding of proteins. It catalyzes the cis-trans isomerization of proline imidic peptide bonds in oligopeptides. Acts as a regulatory subunit for PP2A-like phosphatases modulating their activity or substrate specificity, probably by inducing a conformational change in the catalytic subunit, a direct target of the PPIase. Can reactivate inactive phosphatase PP2A-phosphatase methylesterase complexes (PP2Ai) in presence of ATP and Mg(2+) by dissociating the inactive form from the complex. The protein is Serine/threonine-protein phosphatase 2A activator 1 (rrd1) of Emericella nidulans (strain FGSC A4 / ATCC 38163 / CBS 112.46 / NRRL 194 / M139) (Aspergillus nidulans).